The sequence spans 201 residues: Holliday junction branch migration complex subunit RuvA (201 aa).

Positions 1 to 64 are domain I; sequence MIGRLHGKII…EDAHLLFGFA (64 aa). The tract at residues 65 to 143 is domain II; the sequence is QKQDRTLFRE…GVAQSDFFEE (79 aa). A flexible linker region spans residues 144–154; that stretch reads HSVETIVATHS. Residues 154–201 are domain III; the sequence is SHDPADEARDALVALGYKLADAEKMIKKVNKAGATSEQLIREALKASL.

It belongs to the RuvA family. Homotetramer. Forms an RuvA(8)-RuvB(12)-Holliday junction (HJ) complex. HJ DNA is sandwiched between 2 RuvA tetramers; dsDNA enters through RuvA and exits via RuvB. An RuvB hexamer assembles on each DNA strand where it exits the tetramer. Each RuvB hexamer is contacted by two RuvA subunits (via domain III) on 2 adjacent RuvB subunits; this complex drives branch migration. In the full resolvosome a probable DNA-RuvA(4)-RuvB(12)-RuvC(2) complex forms which resolves the HJ.

The protein localises to the cytoplasm. Its function is as follows. The RuvA-RuvB-RuvC complex processes Holliday junction (HJ) DNA during genetic recombination and DNA repair, while the RuvA-RuvB complex plays an important role in the rescue of blocked DNA replication forks via replication fork reversal (RFR). RuvA specifically binds to HJ cruciform DNA, conferring on it an open structure. The RuvB hexamer acts as an ATP-dependent pump, pulling dsDNA into and through the RuvAB complex. HJ branch migration allows RuvC to scan DNA until it finds its consensus sequence, where it cleaves and resolves the cruciform DNA. The polypeptide is Holliday junction branch migration complex subunit RuvA (Actinobacillus pleuropneumoniae serotype 5b (strain L20)).